We begin with the raw amino-acid sequence, 460 residues long: Cysteine--tRNA ligase (460 aa).

C28 contacts Zn(2+). The 'HIGH' region signature appears at 30-40 (VTIYDLCHIGH). Positions 209, 234, and 238 each coordinate Zn(2+). The 'KMSKS' region signature appears at 266-270 (KMSKS). K269 is an ATP binding site.

This sequence belongs to the class-I aminoacyl-tRNA synthetase family. Monomer. The cofactor is Zn(2+).

The protein resides in the cytoplasm. It catalyses the reaction tRNA(Cys) + L-cysteine + ATP = L-cysteinyl-tRNA(Cys) + AMP + diphosphate. This chain is Cysteine--tRNA ligase, found in Shewanella frigidimarina (strain NCIMB 400).